We begin with the raw amino-acid sequence, 445 residues long: Methylenetetrahydrofolate--tRNA-(uracil-5-)-methyltransferase TrmFO (445 aa).

10–15 (GGGLSG) contacts FAD.

It belongs to the MnmG family. TrmFO subfamily. The cofactor is FAD.

Its subcellular location is the cytoplasm. The catalysed reaction is uridine(54) in tRNA + (6R)-5,10-methylene-5,6,7,8-tetrahydrofolate + NADH + H(+) = 5-methyluridine(54) in tRNA + (6S)-5,6,7,8-tetrahydrofolate + NAD(+). The enzyme catalyses uridine(54) in tRNA + (6R)-5,10-methylene-5,6,7,8-tetrahydrofolate + NADPH + H(+) = 5-methyluridine(54) in tRNA + (6S)-5,6,7,8-tetrahydrofolate + NADP(+). Its function is as follows. Catalyzes the folate-dependent formation of 5-methyl-uridine at position 54 (M-5-U54) in all tRNAs. The sequence is that of Methylenetetrahydrofolate--tRNA-(uracil-5-)-methyltransferase TrmFO from Lawsonia intracellularis (strain PHE/MN1-00).